The chain runs to 189 residues: uncharacterized protein (189 aa).

The N-terminal stretch at 1-23 (MIKTTPHKIVILMGILLSPSVFA) is a signal peptide. The segment at 104-125 (SSPKLIIPQSGDSSSTTSNIGM) is disordered. Positions 113–123 (SGDSSSTTSNI) are enriched in polar residues.

Belongs to the fimbrial protein family.

The protein localises to the fimbrium. In terms of biological role, part of the yadCKLM-htrE-yadVN fimbrial operon. Could contribute to adhesion to various surfaces in specific environmental niches. This is an uncharacterized protein from Escherichia coli (strain K12).